Reading from the N-terminus, the 267-residue chain is Hydroxyethylthiazole kinase (267 aa).

A substrate-binding site is contributed by Met46. Positions 122 and 168 each coordinate ATP. Gly195 contacts substrate.

Belongs to the Thz kinase family. The cofactor is Mg(2+).

The catalysed reaction is 5-(2-hydroxyethyl)-4-methylthiazole + ATP = 4-methyl-5-(2-phosphooxyethyl)-thiazole + ADP + H(+). It participates in cofactor biosynthesis; thiamine diphosphate biosynthesis; 4-methyl-5-(2-phosphoethyl)-thiazole from 5-(2-hydroxyethyl)-4-methylthiazole: step 1/1. Catalyzes the phosphorylation of the hydroxyl group of 4-methyl-5-beta-hydroxyethylthiazole (THZ). In Nitratidesulfovibrio vulgaris (strain ATCC 29579 / DSM 644 / CCUG 34227 / NCIMB 8303 / VKM B-1760 / Hildenborough) (Desulfovibrio vulgaris), this protein is Hydroxyethylthiazole kinase.